The following is a 202-amino-acid chain: Imidazoleglycerol-phosphate dehydratase (202 aa).

The protein belongs to the imidazoleglycerol-phosphate dehydratase family.

It localises to the cytoplasm. It carries out the reaction D-erythro-1-(imidazol-4-yl)glycerol 3-phosphate = 3-(imidazol-4-yl)-2-oxopropyl phosphate + H2O. It functions in the pathway amino-acid biosynthesis; L-histidine biosynthesis; L-histidine from 5-phospho-alpha-D-ribose 1-diphosphate: step 6/9. The polypeptide is Imidazoleglycerol-phosphate dehydratase (Sinorhizobium fredii (strain NBRC 101917 / NGR234)).